Reading from the N-terminus, the 542-residue chain is MTKAPATKKLQRVPSKAIWLFSGSDQLTQASDKTVKSTKSMDKEIVNLKKDLIRSRFLIQCVKIGRGYFTMLQEETAFKKHQQHLKKLQEEELNKFQPAKKYSDIQCRDTLLTTYEYEKMKKLEAGIIIRPFTPIHNCIMAPSLPESHVDPLFRQLCALHWLLEALTIDHTHHTMRPVIACWNPKDPGGSKSTIKKINKDKSMGQRWDHFVTAPKTKKFKAPAIRSLATRKPSRRGSALSLTRTSGGSSPQSSMMSVNPSSDEPTGSKDIEDNESSSTKPEEEVLHFSLQKLLEMVREDARRTILMETEMQKKAPSILSLVKQVKSDYGWKDWQTTHKSSERSSTTSGESHIQVTQKKSKGRANRDIIYCKTGICNTMRAKFYSVAQEAGFCLQDKMEILKKRQEERGLQKFHSFIVTSNFQKDIAKMRHQVSMVKGDAEEMADHWYFDLLSKLPEDLKSFRPAKKILTKLQKFGENLDLRIRPHVLLKVLQDLRIWELCSPDIAVAIEFVREHIIHMPQEDYVNWLQSRVNMPIRHRPILT.

The stretch at 70–97 (TMLQEETAFKKHQQHLKKLQEEELNKFQ) forms a coiled coil. Disordered stretches follow at residues 228-284 (ATRK…EEEV) and 334-358 (QTTH…TQKK). Low complexity-rich tracts occupy residues 245–261 (SGGS…NPSS) and 342–351 (RSSTTSGESH).

The polypeptide is Coiled-coil domain-containing protein 60 (Ccdc60) (Rattus norvegicus (Rat)).